Consider the following 294-residue polypeptide: Bifunctional protein FolD (294 aa).

NADP(+) is bound by residues glycine 166–serine 168, serine 191, and isoleucine 232.

The protein belongs to the tetrahydrofolate dehydrogenase/cyclohydrolase family. In terms of assembly, homodimer.

It catalyses the reaction (6R)-5,10-methylene-5,6,7,8-tetrahydrofolate + NADP(+) = (6R)-5,10-methenyltetrahydrofolate + NADPH. It carries out the reaction (6R)-5,10-methenyltetrahydrofolate + H2O = (6R)-10-formyltetrahydrofolate + H(+). It functions in the pathway one-carbon metabolism; tetrahydrofolate interconversion. Catalyzes the oxidation of 5,10-methylenetetrahydrofolate to 5,10-methenyltetrahydrofolate and then the hydrolysis of 5,10-methenyltetrahydrofolate to 10-formyltetrahydrofolate. The polypeptide is Bifunctional protein FolD (Nitrobacter hamburgensis (strain DSM 10229 / NCIMB 13809 / X14)).